The sequence spans 489 residues: Rhamnulokinase (489 aa).

ATP is bound at residue 13-17 (ASSGR). The cysteines at positions 68 and 222 are disulfide-linked. Residues Gly83 and 236–238 (HDT) contribute to the substrate site. Residue Asp237 is the Proton acceptor of the active site. Thr259 provides a ligand contact to ATP. Asn296 contributes to the substrate binding site. Gln304 provides a ligand contact to ATP. Cys353 and Cys370 form a disulfide bridge. An ATP-binding site is contributed by Gly402. A disulfide bridge links Cys413 with Cys417.

This sequence belongs to the rhamnulokinase family. Mg(2+) serves as cofactor.

The enzyme catalyses L-rhamnulose + ATP = L-rhamnulose 1-phosphate + ADP + H(+). It participates in carbohydrate degradation; L-rhamnose degradation; glycerone phosphate from L-rhamnose: step 2/3. Functionally, involved in the catabolism of L-rhamnose (6-deoxy-L-mannose). Catalyzes the transfer of the gamma-phosphate group from ATP to the 1-hydroxyl group of L-rhamnulose to yield L-rhamnulose 1-phosphate. The chain is Rhamnulokinase from Enterobacter sp. (strain 638).